A 287-amino-acid polypeptide reads, in one-letter code: Mitochondrial dicarboxylate carrier (287 aa).

3 Solcar repeats span residues 8–88 (SRWY…VRDR), 101–188 (EKVL…AKQL), and 197–280 (DNIF…LRKN). A run of 6 helical transmembrane segments spans residues 10-30 (WYFG…LDLL), 63-82 (GLSA…FAIY), 103-123 (VLLG…ADLV), 163-182 (GATM…LSCY), 203-223 (FVAS…LDVL), and 255-275 (GLVP…VFLE).

It belongs to the mitochondrial carrier (TC 2.A.29) family. Present in high amounts in liver and kidney, and at lower levels in all the other tissues analyzed.

The protein resides in the mitochondrion inner membrane. It catalyses the reaction (S)-malate(in) + phosphate(out) = (S)-malate(out) + phosphate(in). The catalysed reaction is malonate(out) + (S)-malate(in) = malonate(in) + (S)-malate(out). The enzyme catalyses (S)-malate(in) + succinate(out) = (S)-malate(out) + succinate(in). It carries out the reaction (S)-malate(in) + sulfate(out) = (S)-malate(out) + sulfate(in). It catalyses the reaction malonate(out) + phosphate(in) = malonate(in) + phosphate(out). The catalysed reaction is succinate(out) + phosphate(in) = succinate(in) + phosphate(out). The enzyme catalyses sulfate(out) + phosphate(in) = sulfate(in) + phosphate(out). It carries out the reaction malonate(out) + succinate(in) = malonate(in) + succinate(out). Its function is as follows. Catalyzes the electroneutral exchange or flux of physiologically important metabolites such as dicarboxylates (malonate, malate, succinate), inorganic sulfur-containing anions, and phosphate, across mitochondrial inner membrane. Plays an important role in gluconeogenesis, fatty acid metabolism, urea synthesis, and sulfur metabolism, particularly in liver, by supplying the substrates for the different metabolic processes. Regulates fatty acid release from adipocytes, and contributes to systemic insulin sensitivity. The protein is Mitochondrial dicarboxylate carrier (SLC25A10) of Homo sapiens (Human).